We begin with the raw amino-acid sequence, 183 residues long: Dual-action ribosomal maturation protein DarP (183 aa).

The protein belongs to the DarP family.

The protein resides in the cytoplasm. Functionally, member of a network of 50S ribosomal subunit biogenesis factors which assembles along the 30S-50S interface, preventing incorrect 23S rRNA structures from forming. Promotes peptidyl transferase center (PTC) maturation. This is Dual-action ribosomal maturation protein DarP from Salmonella paratyphi A (strain ATCC 9150 / SARB42).